The primary structure comprises 600 residues: Proton channel OTOP1 (600 aa).

The tract at residues 1–50 (MPGDRGALSSPAASSGSPSAAPSGIAACPPPPSPLARASPQASGPRRGAS) is disordered. At 1–56 (MPGDRGALSSPAASSGSPSAAPSGIAACPPPPSPLARASPQASGPRRGASVPQKLA) the chain is on the cytoplasmic side. The segment covering 7–27 (ALSSPAASSGSPSAAPSGIAA) has biased composition (low complexity). A helical membrane pass occupies residues 57-78 (ETLSSQYGLNVFVAGLLFLLAW). Residues 79–86 (AVHATGVG) are Extracellular-facing. The chain crosses the membrane as a helical span at residues 87–110 (KSDLLCVLTALMLLQLLWMLWYVG). Topologically, residues 111 to 128 (RSYMQRRLIRPKDTHAGA) are cytoplasmic. A helical membrane pass occupies residues 129–151 (RWLRGSITLFAFITIVLGCLKVA). Over 152–161 (YFIGFSECLS) the chain is Extracellular. Residues 162-186 (ATEGVFPVTHAVHTLLQVYFLWGHA) form a helical membrane-spanning segment. Over 187–194 (KDIIMSFK) the chain is Cytoplasmic. Residues 195-221 (TLERFGVIHSVFTNLLLWANSVLNESK) traverse the membrane as a helical segment. At 222–262 (HQLNEHKERLITLGFGNITIVLDDHTPQCNCTPPALCSALS) the chain is on the extracellular side. Residues 263–288 (HGIYYLYPFNIEYQILASTMLYVLWK) traverse the membrane as a helical segment. The Cytoplasmic portion of the chain corresponds to 289–309 (NIGRRVDSSRHQKMQCRFDGV). The helical transmembrane segment at 310 to 332 (LVGSVLGLTVLAATIAVVVVYMI) threads the bilayer. Residues 333–342 (HIGRSKSKSE) lie on the Extracellular side of the membrane. The chain crosses the membrane as a helical span at residues 343–368 (SALIMFYLYAITVLLLMGAAGLVGSW). Residues 369-386 (IYRVDEKSLDESKNPARK) lie on the Cytoplasmic side of the membrane. A helical transmembrane segment spans residues 387–411 (LDADLLVATASGSWLLSWGSILAIA). Over 412 to 421 (CAETRPPYTW) the chain is Extracellular. A helical membrane pass occupies residues 422–442 (YNLPYSVLVIVEKYVQNIFII). Residues 443 to 532 (ESVHLEPEGV…QGGMKRRLLR (90 aa)) lie on the Cytoplasmic side of the membrane. The helical transmembrane segment at 533–551 (NITAFLFLCNISLWIPPAF) threads the bilayer. Topologically, residues 552–569 (GCRPEYDNGLEEIVFGFE) are extracellular. The chain crosses the membrane as a helical span at residues 570–593 (PWIIVVNLAMPFSIFYRMHAAAAL). The Cytoplasmic portion of the chain corresponds to 594–600 (FEVYCKI).

This sequence belongs to the otopetrin family. As to quaternary structure, homodimer. Interacts with STAT1, independently of STAT1 phosphorylation status.

The protein localises to the cell membrane. It is found in the cell projection. It localises to the microvillus. The enzyme catalyses H(+)(in) = H(+)(out). Its activity is regulated as follows. Activated by both acid and alkali, with proton influx in response to extracellular acid and proton efflux during alkali stimulation. Inhibited by Zn(2+); this inhibition is thought to be pH-sensitive. Currents evoked in response to mild acid (pH 6.0) stimulus may also be mildly potentiated by exposure to Zn(2+). Activated by NH(4)Cl. Its function is as follows. Proton-selective ion channel. Biphasically modulated by acid and alkali, mediating proton influx and efflux in response to extracellular acid and base stimulation, respectively. Sour taste receptor, which carries inward currents in response to extracellular acidification. Sensor for ammonium chloride (NH(4)Cl) in taste receptor cells. NH(4)Cl acts by increasing the intracellular pH, thereby generating a driving force for proton entry through OTOP1 channel. Might also participate in alkaline sensation. Plays a role in the regulation of Ca(2+) flux in response to purigenic (ATP, ADP and UDP) stimuli, leading to increase in cytosolic Ca(2+) due to influx of extracellular calcium. May play this role by inhibiting P2Y purinoceptor-mediated Ca(2+) release in a Ca(2+)-dependent manner and promote an influx of Ca(2+) in response to ATP. Through this mechanism and possibly others, plays a role in the formation and function of calcium carbonate-based structures in the vestibular system of the inner ear, called otoconia, that sense gravity and linear acceleration. In obesity, may attenuate adipose tissue inflammation, through the negative regulation of IFNG signaling, hence may play an adaptive role in the maintainance of metabolic homeostasis. Following alkali activation, may also be permeable Na(+), K(+), Cs(+) and Li(+). This is Proton channel OTOP1 from Rattus norvegicus (Rat).